Here is a 404-residue protein sequence, read N- to C-terminus: Coenzyme F420H(2) oxidase (404 aa).

Residues His84, Glu86, Asp88, His89, His152, Asp170, and His233 each contribute to the Fe cation site. Residues 259–399 (VTVIYDTMHH…ACFEAGRRLA (141 aa)) enclose the Flavodoxin-like domain. Residues 265–270 (TMHHST), 317–320 (AIYD), and 351–356 (SMGGRG) each bind FMN.

In the N-terminal section; belongs to the zinc metallo-hydrolase group 3 family. Requires FMN as cofactor. Fe cation is required as a cofactor.

The catalysed reaction is 2 reduced coenzyme F420-(gamma-L-Glu)(n) + O2 = 2 oxidized coenzyme F420-(gamma-L-Glu)(n) + 2 H2O + 2 H(+). Catalyzes the oxidation of F420H(2) with O(2). May be involved in O(2) detoxification, reducing the intracellular O(2) concentration to a level allowing growth at the expense of methane formation. The protein is Coenzyme F420H(2) oxidase of Methanothermobacter thermautotrophicus (strain ATCC 29096 / DSM 1053 / JCM 10044 / NBRC 100330 / Delta H) (Methanobacterium thermoautotrophicum).